A 205-amino-acid chain; its full sequence is V-type ATP synthase subunit E (205 aa).

The protein belongs to the V-ATPase E subunit family.

Functionally, produces ATP from ADP in the presence of a proton gradient across the membrane. In Treponema denticola (strain ATCC 35405 / DSM 14222 / CIP 103919 / JCM 8153 / KCTC 15104), this protein is V-type ATP synthase subunit E.